We begin with the raw amino-acid sequence, 123 residues long: Small ribosomal subunit protein uS12 (123 aa).

Asp89 carries the post-translational modification 3-methylthioaspartic acid. Positions 104-123 are disordered; that stretch reads SVGVKDRKKSRSKYGAKRPK. The segment covering 109–123 has biased composition (basic residues); that stretch reads DRKKSRSKYGAKRPK.

It belongs to the universal ribosomal protein uS12 family. In terms of assembly, part of the 30S ribosomal subunit. Contacts proteins S8 and S17. May interact with IF1 in the 30S initiation complex.

With S4 and S5 plays an important role in translational accuracy. Its function is as follows. Interacts with and stabilizes bases of the 16S rRNA that are involved in tRNA selection in the A site and with the mRNA backbone. Located at the interface of the 30S and 50S subunits, it traverses the body of the 30S subunit contacting proteins on the other side and probably holding the rRNA structure together. The combined cluster of proteins S8, S12 and S17 appears to hold together the shoulder and platform of the 30S subunit. The protein is Small ribosomal subunit protein uS12 of Pelobacter propionicus (strain DSM 2379 / NBRC 103807 / OttBd1).